We begin with the raw amino-acid sequence, 689 residues long: PR domain zinc finger protein 8 (689 aa).

One can recognise an SET domain in the interval lysine 16–glycine 131. Tyrosine 130 lines the S-adenosyl-L-methionine pocket. Residues tyrosine 155–histidine 183 form a C2H2-type 1 zinc finger. Disordered stretches follow at residues alanine 185–arginine 333 and serine 397–arginine 506. Residues glutamine 193–lysine 210 are compositionally biased toward gly residues. 2 stretches are compositionally biased toward low complexity: residues proline 241 to serine 258 and glycine 273 to glycine 286. Gly residues predominate over residues glutamate 322–arginine 333. The segment covering serine 423–alanine 433 has biased composition (low complexity). Over residues threonine 472–glycine 491 the composition is skewed to gly residues. 2 C2H2-type zinc fingers span residues asparagine 625 to histidine 648 and leucine 666 to histidine 688.

Belongs to the class V-like SAM-binding methyltransferase superfamily. As to quaternary structure, interacts with EPM2A and NHLRC1. This interaction sequesters EPM2A and NHLRC1 to the nucleus. Interacts with BHLHE22. Expressed in brain, heart, skeletal muscle, testes, prostate.

The protein localises to the nucleus. In terms of biological role, probable histone methyltransferase, preferentially acting on 'Lys-9' of histone H3. Involved in the control of steroidogenesis through transcriptional repression of steroidogenesis marker genes such as CYP17A1 and LHCGR. Forms with BHLHE22 a transcriptional repressor complex controlling genes involved in neural development and neuronal differentiation. In the retina, it is required for rod bipolar and type 2 OFF-cone bipolar cell survival. This Homo sapiens (Human) protein is PR domain zinc finger protein 8 (PRDM8).